Here is a 553-residue protein sequence, read N- to C-terminus: Formate--tetrahydrofolate ligase 2 (553 aa).

An ATP-binding site is contributed by 63–70; the sequence is TSAGEGKS.

The protein belongs to the formate--tetrahydrofolate ligase family.

The catalysed reaction is (6S)-5,6,7,8-tetrahydrofolate + formate + ATP = (6R)-10-formyltetrahydrofolate + ADP + phosphate. It functions in the pathway one-carbon metabolism; tetrahydrofolate interconversion. In Lactobacillus acidophilus (strain ATCC 700396 / NCK56 / N2 / NCFM), this protein is Formate--tetrahydrofolate ligase 2.